Here is a 728-residue protein sequence, read N- to C-terminus: Ophiobolin F synthase oblA (728 aa).

The interval 1–322 (MEYKYSTIVD…RYHFPGRWNE (322 aa)) is (7Z)-ophiobola-7,19-dien-3-ol synthase. Positions 93 and 97 each coordinate Mg(2+). Asp93 is a binding site for substrate. A DDXXD 1 motif is present at residues 93–97 (DDEID). Substrate-binding positions include 182–185 (RCMD), Asn226, 230–234 (SYEKE), and 313–314 (RY). Residues 226–234 (NDLFSYEKE) carry the NSE/DTE motif. The segment at 323–728 (LQKLRAEHGI…LRLMVDMLKV (406 aa)) is geranylfarnesyl diphosphate synthase. A compositionally biased stretch (low complexity) spans 362 to 371 (GINGTNGVNG). The interval 362 to 394 (GINGTNGVNGKRNRDEDGDENDARINGNGFKKP) is disordered. Isopentenyl diphosphate is bound by residues Lys439, Arg442, and His471. Residues Asp478 and Asp482 each coordinate Mg(2+). A DDXXD 2 motif is present at residues 478-482 (DDIED). Residue Arg487 participates in dimethylallyl diphosphate binding. Arg488 contacts isopentenyl diphosphate. Residues Lys565, Thr566, Gln604, Asn611, Lys621, and Lys631 each coordinate dimethylallyl diphosphate.

In the N-terminal section; belongs to the terpene synthase family. The protein in the C-terminal section; belongs to the FPP/GGPP synthase family. The cofactor is Mg(2+).

It carries out the reaction isopentenyl diphosphate + (2E,6E)-farnesyl diphosphate = (2E,6E,10E)-geranylgeranyl diphosphate + diphosphate. The catalysed reaction is isopentenyl diphosphate + (2E,6E,10E)-geranylgeranyl diphosphate = (2E,6E,10E,14E)-geranylfarnesyl diphosphate + diphosphate. It catalyses the reaction (2E,6E,10E,14E)-geranylfarnesyl diphosphate + H2O = ophiobolin F + diphosphate. Its pathway is secondary metabolite biosynthesis; terpenoid biosynthesis. Bifunctional sesterterpene synthase; part of the gene cluster that mediates the biosynthesis of the sesterterpenes ophiobolins, fungal phytotoxins with potential anti-cancer activities. The first step of the pathway is performed by the sesterterpene synthase oblA that possesses both prenyl transferase and terpene cyclase activity, converting isopentenyl diphosphate and dimethylallyl diphosphate into geranylfarnesyl diphosphate (GFPP) and further converting GFPP into ophiobolin F, respectively. Other sesterterpenoids (C(25) terpenoids) are found as minor products of oblA. The cytochrome P450 monooxygenase oblB then catalyzes a four-step oxidative transformation of ophiobolin F to yield ophiobolin C. The function of the cytochrome P450 monooxygenase oblE has still to be determined. This Emericella variicolor (Aspergillus stellatus) protein is Ophiobolin F synthase oblA.